A 327-amino-acid chain; its full sequence is Clavesin-2 (327 aa).

A CRAL-TRIO domain is found at 96–257; that stretch reads IKQALKDGFP…EFGGMLPPYD (162 aa). Residues 289 to 327 are disordered; sequence DKELSPKSMKRSQSVVDPTALKRMDKSEEENMQPLLALD.

In terms of assembly, forms a complex with clathrin heavy chain and gamma-adaptin.

The protein resides in the golgi apparatus. The protein localises to the trans-Golgi network membrane. Its subcellular location is the early endosome membrane. It is found in the cytoplasmic vesicle. It localises to the clathrin-coated vesicle. Its function is as follows. Required for normal morphology of late endosomes and/or lysosomes in neurons. Binds phosphatidylinositol 3,5-bisphosphate (PtdIns(3,5)P2). The sequence is that of Clavesin-2 (Clvs2) from Mus musculus (Mouse).